The primary structure comprises 279 residues: Undecaprenyl-diphosphatase (279 aa).

6 helical membrane passes run Phe45–Tyr65, Trp85–Phe105, Phe113–Val133, Ser188–Leu208, Leu226–Leu246, and Phe255–Val275.

It belongs to the UppP family.

The protein resides in the cell membrane. The enzyme catalyses di-trans,octa-cis-undecaprenyl diphosphate + H2O = di-trans,octa-cis-undecaprenyl phosphate + phosphate + H(+). Its function is as follows. Catalyzes the dephosphorylation of undecaprenyl diphosphate (UPP). Confers resistance to bacitracin. This is Undecaprenyl-diphosphatase from Streptococcus agalactiae serotype III (strain NEM316).